Here is a 99-residue protein sequence, read N- to C-terminus: UPF0122 protein UUR10_0158 (99 aa).

The protein belongs to the UPF0122 family.

Functionally, might take part in the signal recognition particle (SRP) pathway. This is inferred from the conservation of its genetic proximity to ftsY/ffh. May be a regulatory protein. The chain is UPF0122 protein UUR10_0158 from Ureaplasma urealyticum serovar 10 (strain ATCC 33699 / Western).